A 389-amino-acid polypeptide reads, in one-letter code: Alkanesulfonate monooxygenase (389 aa).

It belongs to the SsuD family.

It catalyses the reaction an alkanesulfonate + FMNH2 + O2 = an aldehyde + FMN + sulfite + H2O + 2 H(+). In terms of biological role, catalyzes the desulfonation of aliphatic sulfonates. The polypeptide is Alkanesulfonate monooxygenase (Agrobacterium fabrum (strain C58 / ATCC 33970) (Agrobacterium tumefaciens (strain C58))).